Consider the following 753-residue polypeptide: Synaptotagmin-like protein 5 (753 aa).

Positions 7-123 (FINLSFLLDH…IISGEWFLEE (117 aa)) constitute a RabBD domain. The FYVE-type zinc-finger motif lies at 64–106 (CVHCHKTLGLIFDRGDPCQACSLRVCSECRVTGLDGSWKCTVC). 3 disordered regions span residues 145–279 (RRSP…SREH), 297–359 (LTKS…LNSL), and 380–404 (LASG…VPDA). The residue at position 147 (Ser147) is a Phosphoserine. Polar residues predominate over residues 150–174 (SEETQNQEQAQQCVDKSDTLSSVRQ). Residues 195–206 (TRGEIRTPKPES) are compositionally biased toward basic and acidic residues. Polar residues predominate over residues 214–223 (LDSQNLQSFK). Residues 224-237 (SASGSDRGSTTSSD) show a composition bias toward low complexity. Polar residues predominate over residues 249–275 (KSSYSNGGIPVTQRSPVPSAHSVTSIN). The span at 380–391 (LASGLSTNSQAG) shows a compositional bias: polar residues. C2 domains are found at residues 429–550 (VTGE…DEWF) and 597–717 (KRGK…VDWM).

As to quaternary structure, binds RAB27A that has been activated by GTP-binding.

It localises to the membrane. May act as Rab effector protein and play a role in vesicle trafficking. Binds phospholipids. This Mus musculus (Mouse) protein is Synaptotagmin-like protein 5 (Sytl5).